Here is a 94-residue protein sequence, read N- to C-terminus: uncharacterized protein (94 aa).

The N-terminal stretch at 1 to 22 (MIMKNCLLLGALLMGFTGVAMA) is a signal peptide.

This is an uncharacterized protein from Escherichia coli (strain K12).